A 126-amino-acid chain; its full sequence is Large ribosomal subunit protein bL20 (126 aa).

The protein belongs to the bacterial ribosomal protein bL20 family.

In terms of biological role, binds directly to 23S ribosomal RNA and is necessary for the in vitro assembly process of the 50S ribosomal subunit. It is not involved in the protein synthesizing functions of that subunit. The protein is Large ribosomal subunit protein bL20 of Buchnera aphidicola subsp. Baizongia pistaciae (strain Bp).